We begin with the raw amino-acid sequence, 339 residues long: UDP-N-acetylenolpyruvoylglucosamine reductase (339 aa).

In terms of domain architecture, FAD-binding PCMH-type spans 18-189; sequence GIDVRARLLA…LRVRLRLTRR (172 aa). Residue Arg166 is part of the active site. Residue Ser239 is the Proton donor of the active site. Residue Glu335 is part of the active site.

Belongs to the MurB family. Requires FAD as cofactor.

Its subcellular location is the cytoplasm. The catalysed reaction is UDP-N-acetyl-alpha-D-muramate + NADP(+) = UDP-N-acetyl-3-O-(1-carboxyvinyl)-alpha-D-glucosamine + NADPH + H(+). Its pathway is cell wall biogenesis; peptidoglycan biosynthesis. Cell wall formation. This chain is UDP-N-acetylenolpyruvoylglucosamine reductase, found in Pseudomonas aeruginosa (strain ATCC 15692 / DSM 22644 / CIP 104116 / JCM 14847 / LMG 12228 / 1C / PRS 101 / PAO1).